The sequence spans 267 residues: Tryptophan synthase alpha chain (267 aa).

Active-site proton acceptor residues include glutamate 47 and aspartate 58.

The protein belongs to the TrpA family. As to quaternary structure, tetramer of two alpha and two beta chains.

It catalyses the reaction (1S,2R)-1-C-(indol-3-yl)glycerol 3-phosphate + L-serine = D-glyceraldehyde 3-phosphate + L-tryptophan + H2O. The protein operates within amino-acid biosynthesis; L-tryptophan biosynthesis; L-tryptophan from chorismate: step 5/5. Functionally, the alpha subunit is responsible for the aldol cleavage of indoleglycerol phosphate to indole and glyceraldehyde 3-phosphate. This Prosthecochloris aestuarii (strain DSM 271 / SK 413) protein is Tryptophan synthase alpha chain.